The sequence spans 444 residues: Tryptophan 5-hydroxylase 1 (444 aa).

One can recognise an ACT domain in the interval 19–94 (TLIFSLKNEV…NVLSVTPPDN (76 aa)). Phosphoserine; by PKA is present on serine 58. Residues tyrosine 235, arginine 257, and threonine 265 each contribute to the L-tryptophan site. Residues histidine 272, histidine 277, and glutamate 317 each coordinate Fe cation. Serine 336 and isoleucine 366 together coordinate L-tryptophan.

It belongs to the biopterin-dependent aromatic amino acid hydroxylase family. As to quaternary structure, homotetramer. Interacts with DNAJC12. The cofactor is Fe(2+). Ubiquitinated, leading to its degradation by the proteasome. Ubiquitinated is triggered by phosphorylation. Post-translationally, phosphorylated; triggering degradation by the proteasome.

It carries out the reaction (6R)-L-erythro-5,6,7,8-tetrahydrobiopterin + L-tryptophan + O2 = 5-hydroxy-L-tryptophan + (4aS,6R)-4a-hydroxy-L-erythro-5,6,7,8-tetrahydrobiopterin. It functions in the pathway aromatic compound metabolism; serotonin biosynthesis; serotonin from L-tryptophan: step 1/2. Functionally, oxidizes L-tryptophan to 5-hydroxy-l-tryptophan in the rate-determining step of serotonin biosynthesis. This is Tryptophan 5-hydroxylase 1 (TPH1) from Oryctolagus cuniculus (Rabbit).